The following is a 132-amino-acid chain: Holo-[acyl-carrier-protein] synthase (132 aa).

D8 and E64 together coordinate Mg(2+).

It belongs to the P-Pant transferase superfamily. AcpS family. The cofactor is Mg(2+).

It localises to the cytoplasm. The catalysed reaction is apo-[ACP] + CoA = holo-[ACP] + adenosine 3',5'-bisphosphate + H(+). Its function is as follows. Transfers the 4'-phosphopantetheine moiety from coenzyme A to a Ser of acyl-carrier-protein. This chain is Holo-[acyl-carrier-protein] synthase, found in Shewanella woodyi (strain ATCC 51908 / MS32).